The chain runs to 321 residues: Protein translocase subunit SecF (321 aa).

6 helical membrane passes run 23-43, 158-178, 189-209, 217-237, 258-280, and 290-312; these read VWLISGFAVLISFLGFFFSWT, LQTTLISLLVAFSCVAIYISI, LLALFHDVLIVCGVFSWLGII, LFAVALLTIAGYSVNDTVVVF, FAVSATLTRTLYTSGTTLLPLIA, and YWFAIALALGVVVGSWSSIALVP.

Belongs to the SecD/SecF family. SecF subfamily. As to quaternary structure, forms a complex with SecD. Part of the essential Sec protein translocation apparatus which comprises SecA, SecYEG and auxiliary proteins SecDF. Other proteins may also be involved.

It is found in the cell inner membrane. Functionally, part of the Sec protein translocase complex. Interacts with the SecYEG preprotein conducting channel. SecDF uses the proton motive force (PMF) to complete protein translocation after the ATP-dependent function of SecA. Probably participates in protein translocation into and across both the cytoplasmic and thylakoid membranes in cyanobacterial cells. In Prochlorococcus marinus (strain SARG / CCMP1375 / SS120), this protein is Protein translocase subunit SecF.